The primary structure comprises 356 residues: Tyrosine recombinase XerS (356 aa).

The region spanning 16 to 121 is the Core-binding (CB) domain; that stretch reads IMPWYVLDYY…ALSSLYKYLT (106 aa). One can recognise a Tyr recombinase domain in the interval 169–354; sequence AFLDYVDKEY…VNDEQKNALD (186 aa). Residues Arg210, Lys234, His306, Arg309, and His332 contribute to the active site. The O-(3'-phospho-DNA)-tyrosine intermediate role is filled by Tyr341.

It belongs to the 'phage' integrase family. XerS subfamily.

Its subcellular location is the cytoplasm. Its activity is regulated as follows. FtsK is required for recombination. Its function is as follows. Site-specific tyrosine recombinase, which acts by catalyzing the cutting and rejoining of the recombining DNA molecules. Essential to convert dimers of the bacterial chromosome into monomers to permit their segregation at cell division. The sequence is that of Tyrosine recombinase XerS from Streptococcus pyogenes serotype M2 (strain MGAS10270).